An 89-amino-acid polypeptide reads, in one-letter code: NAD(P)H-quinone oxidoreductase subunit L (89 aa).

2 helical membrane-spanning segments follow: residues Val29–Met46 and Leu59–Leu79.

This sequence belongs to the complex I NdhL subunit family. As to quaternary structure, NDH-1 can be composed of about 15 different subunits; different subcomplexes with different compositions have been identified which probably have different functions.

It localises to the cellular thylakoid membrane. It catalyses the reaction a plastoquinone + NADH + (n+1) H(+)(in) = a plastoquinol + NAD(+) + n H(+)(out). The enzyme catalyses a plastoquinone + NADPH + (n+1) H(+)(in) = a plastoquinol + NADP(+) + n H(+)(out). NDH-1 shuttles electrons from an unknown electron donor, via FMN and iron-sulfur (Fe-S) centers, to quinones in the respiratory and/or the photosynthetic chain. The immediate electron acceptor for the enzyme in this species is believed to be plastoquinone. Couples the redox reaction to proton translocation, and thus conserves the redox energy in a proton gradient. Cyanobacterial NDH-1 also plays a role in inorganic carbon-concentration. The protein is NAD(P)H-quinone oxidoreductase subunit L of Prochlorococcus marinus (strain NATL1A).